A 149-amino-acid polypeptide reads, in one-letter code: uncharacterized protein (149 aa).

Over residues 130–144 the composition is skewed to basic and acidic residues; the sequence is ESNVTKENIEIKEEK. Residues 130–149 form a disordered region; that stretch reads ESNVTKENIEIKEEKEENSE.

This is an uncharacterized protein from Methanocaldococcus jannaschii (strain ATCC 43067 / DSM 2661 / JAL-1 / JCM 10045 / NBRC 100440) (Methanococcus jannaschii).